The following is a 240-amino-acid chain: tRNA1(Val) (adenine(37)-N6)-methyltransferase (240 aa).

The protein belongs to the methyltransferase superfamily. tRNA (adenine-N(6)-)-methyltransferase family.

It localises to the cytoplasm. The enzyme catalyses adenosine(37) in tRNA1(Val) + S-adenosyl-L-methionine = N(6)-methyladenosine(37) in tRNA1(Val) + S-adenosyl-L-homocysteine + H(+). Specifically methylates the adenine in position 37 of tRNA(1)(Val) (anticodon cmo5UAC). The sequence is that of tRNA1(Val) (adenine(37)-N6)-methyltransferase from Vibrio cholerae serotype O1 (strain ATCC 39315 / El Tor Inaba N16961).